We begin with the raw amino-acid sequence, 156 residues long: Sperm acrosome-associated protein 5 (156 aa).

A signal peptide spans M1 to A18. A C-type lysozyme domain is found at K19–N147. 4 disulfide bridges follow: C24-C144, C48-C132, C82-C97, and C93-C111. Residue E53 is part of the active site.

The protein belongs to the glycosyl hydrolase 22 family.

Its subcellular location is the secreted. The catalysed reaction is Hydrolysis of (1-&gt;4)-beta-linkages between N-acetylmuramic acid and N-acetyl-D-glucosamine residues in a peptidoglycan and between N-acetyl-D-glucosamine residues in chitodextrins.. This Bos taurus (Bovine) protein is Sperm acrosome-associated protein 5 (SPACA5).